The following is a 240-amino-acid chain: 1-(5-phosphoribosyl)-5-[(5-phosphoribosylamino)methylideneamino] imidazole-4-carboxamide isomerase (240 aa).

Asp8 serves as the catalytic Proton acceptor. Catalysis depends on Asp129, which acts as the Proton donor.

It belongs to the HisA/HisF family.

It is found in the cytoplasm. The enzyme catalyses 1-(5-phospho-beta-D-ribosyl)-5-[(5-phospho-beta-D-ribosylamino)methylideneamino]imidazole-4-carboxamide = 5-[(5-phospho-1-deoxy-D-ribulos-1-ylimino)methylamino]-1-(5-phospho-beta-D-ribosyl)imidazole-4-carboxamide. It participates in amino-acid biosynthesis; L-histidine biosynthesis; L-histidine from 5-phospho-alpha-D-ribose 1-diphosphate: step 4/9. The sequence is that of 1-(5-phosphoribosyl)-5-[(5-phosphoribosylamino)methylideneamino] imidazole-4-carboxamide isomerase from Listeria welshimeri serovar 6b (strain ATCC 35897 / DSM 20650 / CCUG 15529 / CIP 8149 / NCTC 11857 / SLCC 5334 / V8).